The following is a 188-amino-acid chain: Peptidyl-tRNA hydrolase (188 aa).

Tyr14 lines the tRNA pocket. His19 serves as the catalytic Proton acceptor. TRNA-binding residues include Tyr64, Asn66, and Asn113.

This sequence belongs to the PTH family. As to quaternary structure, monomer.

The protein localises to the cytoplasm. It carries out the reaction an N-acyl-L-alpha-aminoacyl-tRNA + H2O = an N-acyl-L-amino acid + a tRNA + H(+). Its function is as follows. Hydrolyzes ribosome-free peptidyl-tRNAs (with 1 or more amino acids incorporated), which drop off the ribosome during protein synthesis, or as a result of ribosome stalling. In terms of biological role, catalyzes the release of premature peptidyl moieties from peptidyl-tRNA molecules trapped in stalled 50S ribosomal subunits, and thus maintains levels of free tRNAs and 50S ribosomes. This chain is Peptidyl-tRNA hydrolase, found in Chloroflexus aurantiacus (strain ATCC 29364 / DSM 637 / Y-400-fl).